We begin with the raw amino-acid sequence, 150 residues long: Large ribosomal subunit protein bL9 (150 aa).

It belongs to the bacterial ribosomal protein bL9 family.

Binds to the 23S rRNA. This is Large ribosomal subunit protein bL9 from Shewanella pealeana (strain ATCC 700345 / ANG-SQ1).